The sequence spans 417 residues: Prostaglandin E2 receptor EP3 subtype (417 aa).

The Extracellular portion of the chain corresponds to 1-52 (MKATRDHASAPFCTRFNHSDPGIWAAERAVEAPNNLTLPPEPSEDCGSVSVA). N17 and N35 each carry an N-linked (GlcNAc...) asparagine glycan. Residues 53–77 (FSMTMMITGFVGNALAITLVSKSYR) traverse the membrane as a helical segment. Over 78-90 (RREGKRKKSFLLC) the chain is Cytoplasmic. A helical membrane pass occupies residues 91–111 (IGWLALTDMVGQLLTSPVVIV). Over 112 to 130 (LYLSHQRWEQLDPSGRLCT) the chain is Extracellular. A helical membrane pass occupies residues 131-152 (FFGLTMTVFGLSSLFIASAMAV). Residues 153–174 (ERALATRAPHWYSSHMKTSVTR) lie on the Cytoplasmic side of the membrane. The helical transmembrane segment at 175–196 (AVLLGVWLAVLAFALLPVLGVG) threads the bilayer. Residues 197 to 226 (QYTIQWPGTWCFISTGPGGNGTNSRQNWGN) are Extracellular-facing. N216 carries an N-linked (GlcNAc...) asparagine glycan. Residues 227–252 (VFFASAFAILGLSALVVTFACNLATI) form a helical membrane-spanning segment. The Cytoplasmic portion of the chain corresponds to 253-282 (KALVSRCRAKATASQSSAQWGRITTETAIQ). A helical membrane pass occupies residues 283–306 (LMGIMCVLSVCWSPLLIMMLKMIF). Residue N307 is glycosylated (N-linked (GlcNAc...) asparagine). Over 307 to 326 (NHTSVEHCKTYTENQDECNF) the chain is Extracellular. Residues 327–348 (FLIAVRLASLNQILDPWVYLLL) traverse the membrane as a helical segment. Topologically, residues 349-417 (RKILLQKFCQ…HIYLHTLEHQ (69 aa)) are cytoplasmic.

Belongs to the G-protein coupled receptor 1 family. In terms of assembly, interacts (via C-terminus) with MKLN1.

Its subcellular location is the cell membrane. Receptor for prostaglandin E2 (PGE2). The various isoforms have identical ligand binding properties but interact with different second messenger systems: isoform EP3A couples to G(i)/G(o) proteins; isoform EP3B and isoform EP3C couple to G(s), and isoform EP3D couples to G(i), G(s) and G(p). Required for normal development of fever in response to pyrinogens, including IL1B, prostaglandin E2 and bacterial lipopolysaccharide (LPS). Required for normal potentiation of platelet aggregation by prostaglandin E2, and thus plays a role in the regulation of blood coagulation. Required for increased HCO3(-) secretion in the duodenum in response to mucosal acidification, and thereby contributes to the protection of the mucosa against acid-induced ulceration. Not required for normal kidney function, normal urine volume and osmolality. This Bos taurus (Bovine) protein is Prostaglandin E2 receptor EP3 subtype (PTGER3).